We begin with the raw amino-acid sequence, 329 residues long: DNA-directed RNA polymerase subunit alpha (329 aa).

The interval 1–232 is alpha N-terminal domain (alpha-NTD); that stretch reads MQEMLEQLLT…YQLIAFVDLK (232 aa). Residues 246 to 329 are alpha C-terminal domain (alpha-CTD); that stretch reads FDPIFLQPVD…PSSLVSKESA (84 aa).

It belongs to the RNA polymerase alpha chain family. As to quaternary structure, homodimer. The RNAP catalytic core consists of 2 alpha, 1 beta, 1 beta' and 1 omega subunit. When a sigma factor is associated with the core the holoenzyme is formed, which can initiate transcription.

It catalyses the reaction RNA(n) + a ribonucleoside 5'-triphosphate = RNA(n+1) + diphosphate. In terms of biological role, DNA-dependent RNA polymerase catalyzes the transcription of DNA into RNA using the four ribonucleoside triphosphates as substrates. In Hydrogenovibrio crunogenus (strain DSM 25203 / XCL-2) (Thiomicrospira crunogena), this protein is DNA-directed RNA polymerase subunit alpha.